A 189-amino-acid chain; its full sequence is Recombination protein RecR (189 aa).

Residues 48 to 63 form a C4-type zinc finger; it reads CQTCFHLSAEPTCEIC. The Toprim domain occupies 71–165; the sequence is GMLCVVADSR…EVSRIAYGLP (95 aa).

This sequence belongs to the RecR family.

In terms of biological role, may play a role in DNA repair. It seems to be involved in an RecBC-independent recombinational process of DNA repair. It may act with RecF and RecO. The sequence is that of Recombination protein RecR from Synechococcus sp. (strain CC9311).